We begin with the raw amino-acid sequence, 183 residues long: Probable chemoreceptor glutamine deamidase CheD (183 aa).

The protein belongs to the CheD family.

The enzyme catalyses L-glutaminyl-[protein] + H2O = L-glutamyl-[protein] + NH4(+). Probably deamidates glutamine residues to glutamate on methyl-accepting chemotaxis receptors (MCPs), playing an important role in chemotaxis. The protein is Probable chemoreceptor glutamine deamidase CheD of Sinorhizobium medicae (strain WSM419) (Ensifer medicae).